Here is a 371-residue protein sequence, read N- to C-terminus: Forkhead box protein J1.2 (371 aa).

Disordered regions lie at residues 45–74 and 80–99; these read ANSRPPLPRASQGPCSPPAGDTASCQAPRT and VAVPTAWASLPTPSPSPVQE. A DNA-binding region (fork-head) is located at residues 109-203; it reads KPPYSYATLI…VNGVLKRRRM (95 aa). The tract at residues 228 to 248 is disordered; sequence PSSHHMQHISGGHRQSRRYEK.

It belongs to the FOXJ1 family. Expressed diffusely through much of gastrula and neurula stage embryos. At stage 23 (late neurula), limited to the otic vesicle. By stage 28 (tailbud), also expressed transiently in the presumptive nephrostomes of the pronephros. At stage 35 (early tadpole), expressed broadly in the head and strongly expressed in the developing gill structures.

It is found in the nucleus. Its function is as follows. Key transcription factor required for motile ciliogenesis. Activates genes essential for motile cilia formation and function. This Xenopus tropicalis (Western clawed frog) protein is Forkhead box protein J1.2.